The following is a 220-amino-acid chain: Aspartic protease inhibitor 4 (220 aa).

Residues methionine 1–threonine 23 form the signal peptide. The propeptide occupies serine 24 to serine 32. A Vacuolar targeting signal motif is present at residues asparagine 26–proline 31. An N-linked (GlcNAc...) asparagine glycan is attached at asparagine 51. Disulfide bonds link cysteine 80-cysteine 125 and cysteine 174-cysteine 185.

The protein belongs to the protease inhibitor I3 (leguminous Kunitz-type inhibitor) family. In terms of tissue distribution, tubers.

It is found in the vacuole. In terms of biological role, inhibits tightly cathepsin D (aspartic protease) and weakly trypsin (serine protease). May protect the plant by inhibiting proteases of invading organisms. In Solanum tuberosum (Potato), this protein is Aspartic protease inhibitor 4.